A 237-amino-acid chain; its full sequence is Sugar fermentation stimulation protein homolog (237 aa).

The protein belongs to the SfsA family.

This Methylobacterium radiotolerans (strain ATCC 27329 / DSM 1819 / JCM 2831 / NBRC 15690 / NCIMB 10815 / 0-1) protein is Sugar fermentation stimulation protein homolog.